The sequence spans 72 residues: Heat-stable enterotoxin ST-IA/ST-P (72 aa).

Positions 1 to 19 are cleaved as a signal peptide; that stretch reads MKKLMLAIFISVLSFPSFS. Residues 20-54 constitute a propeptide that is removed on maturation; it reads QSTESLDSSKEKITLETKKCDVVKNNSEKKSENMN. 3 disulfides stabilise this stretch: Cys-59–Cys-64, Cys-60–Cys-68, and Cys-63–Cys-71.

This sequence belongs to the heat-stable enterotoxin family.

It is found in the secreted. Functionally, toxin which activates the particulate form of guanylate cyclase and increases cyclic GMP levels within the host intestinal epithelial cells. This Escherichia coli protein is Heat-stable enterotoxin ST-IA/ST-P (sta1).